Reading from the N-terminus, the 572-residue chain is Urease subunit alpha (572 aa).

Residues 133-572 (GGIDLHVHYI…TSLSQRYFLF (440 aa)) form the Urease domain. His-138, His-140, and Lys-221 together coordinate Ni(2+). Lys-221 bears the N6-carboxylysine mark. His-223 is a binding site for substrate. Ni(2+) contacts are provided by His-250 and His-276. His-324 (proton donor) is an active-site residue. Asp-364 serves as a coordination point for Ni(2+).

This sequence belongs to the metallo-dependent hydrolases superfamily. Urease alpha subunit family. Heterotrimer of UreA (gamma), UreB (beta) and UreC (alpha) subunits. Three heterotrimers associate to form the active enzyme. Requires Ni cation as cofactor. Carboxylation allows a single lysine to coordinate two nickel ions.

The protein resides in the cytoplasm. It catalyses the reaction urea + 2 H2O + H(+) = hydrogencarbonate + 2 NH4(+). Its pathway is nitrogen metabolism; urea degradation; CO(2) and NH(3) from urea (urease route): step 1/1. Ureolysis may allow urea to be employed as a nitrogen source for growth and produces ammonia which may protect from killing at low pH. This is Urease subunit alpha from Streptococcus salivarius (strain 57.I).